We begin with the raw amino-acid sequence, 651 residues long: LysM domain receptor-like kinase 3 (651 aa).

The first 19 residues, 1 to 19 (MNLTFYIFFLSLLPSFSSS), serve as a signal peptide directing secretion. N-linked (GlcNAc...) asparagine glycans are attached at residues Asn2, Asn23, Asn42, Asn73, Asn86, Asn100, Asn114, and Asn177. At 20–236 (KPMNCSDTTR…TAKSGSHVPY (217 aa)) the chain is on the extracellular side. 3 cysteine pairs are disulfide-bonded: Cys24/Cys76, Cys31/Cys133, and Cys74/Cys131. A LysM domain is found at 142-186 (MSYVAMAGDSVQSLSSRFGVSMDRIEDVNGILNLDNITAGDLLYI). Positions 196 to 216 (YETSKINPPAPSPAPASSLAN) are disordered. 2 N-linked (GlcNAc...) asparagine glycosylation sites follow: Asn218 and Asn225. A helical membrane pass occupies residues 237 to 257 (IWIVGGLGVVLALLVLCILVC). Residues 258–651 (ICLRSSSCSS…QVFSGLVQGR (394 aa)) lie on the Cytoplasmic side of the membrane. The residue at position 330 (Thr330) is a Phosphothreonine. The region spanning 341 to 628 (FSDSNLLGHG…VVISLSQILL (288 aa)) is the Protein kinase domain. ATP contacts are provided by residues 347–355 (LGHGNYGSV) and Lys368. Tyr410 is modified (phosphotyrosine). The Proton acceptor role is filled by Asp464. A Phosphoserine modification is found at Ser468. Thr500 and Thr505 each carry phosphothreonine. At Tyr513 the chain carries Phosphotyrosine.

Belongs to the protein kinase superfamily. Ser/Thr protein kinase family.

It localises to the cell membrane. Its function is as follows. Putative Lysin motif (LysM) receptor kinase that may recognize microbe-derived N-acetylglucosamine (NAG)-containing ligands. The chain is LysM domain receptor-like kinase 3 (LYK3) from Arabidopsis thaliana (Mouse-ear cress).